A 371-amino-acid chain; its full sequence is Alanine racemase (371 aa).

The Proton acceptor; specific for D-alanine role is filled by K40. K40 is subject to N6-(pyridoxal phosphate)lysine. R138 provides a ligand contact to substrate. Y267 serves as the catalytic Proton acceptor; specific for L-alanine. M314 contacts substrate.

The protein belongs to the alanine racemase family. It depends on pyridoxal 5'-phosphate as a cofactor.

It catalyses the reaction L-alanine = D-alanine. It functions in the pathway amino-acid biosynthesis; D-alanine biosynthesis; D-alanine from L-alanine: step 1/1. In terms of biological role, catalyzes the interconversion of L-alanine and D-alanine. May also act on other amino acids. The chain is Alanine racemase (alr) from Ligilactobacillus salivarius (strain UCC118) (Lactobacillus salivarius).